Reading from the N-terminus, the 105-residue chain is Large ribosomal subunit protein uL24 (105 aa).

Belongs to the universal ribosomal protein uL24 family. Part of the 50S ribosomal subunit.

In terms of biological role, one of two assembly initiator proteins, it binds directly to the 5'-end of the 23S rRNA, where it nucleates assembly of the 50S subunit. Its function is as follows. One of the proteins that surrounds the polypeptide exit tunnel on the outside of the subunit. The protein is Large ribosomal subunit protein uL24 of Xylella fastidiosa (strain M12).